Reading from the N-terminus, the 821-residue chain is Spindle apparatus protein lin-5 (821 aa).

A disordered region spans residues 161-199; that stretch reads EASSGFRTPKRNNYSLTSLQTPTATARRLRTASSTARRS. Over residues 162–180 the composition is skewed to polar residues; sequence ASSGFRTPKRNNYSLTSLQ. Residues 181-199 are compositionally biased toward low complexity; it reads TPTATARRLRTASSTARRS. Residues 211–634 adopt a coiled-coil conformation; it reads KFMRSERELK…REKESAEIKK (424 aa). Disordered regions lie at residues 736–758 and 779–821; these read RSES…FTPS and LKCS…SKKQ.

Interacts with gpr-1; gpr-1 forms a complex with gpr-2 and GDP-bound goa-1.

It localises to the cytoplasm. The protein localises to the cell cortex. It is found in the cytoskeleton. The protein resides in the spindle. Its subcellular location is the chromosome. It localises to the centromere. The protein localises to the kinetochore. It is found in the microtubule organizing center. The protein resides in the centrosome. Its function is as follows. Essential component of the spindle apparatus required for spindle positioning and chromosome movement. Acts to recruit or anchor gpr-1/gpr-2 complex to the spindle and cortex. Also involved, directly or indirectly, in cytokinesis and in the coupling of DNA replication, centrosome duplication and mitotic division. In Caenorhabditis elegans, this protein is Spindle apparatus protein lin-5 (lin-5).